The chain runs to 305 residues: Porphobilinogen deaminase (305 aa).

S-(dipyrrolylmethanemethyl)cysteine is present on C240.

The protein belongs to the HMBS family. As to quaternary structure, monomer. Requires dipyrromethane as cofactor.

The enzyme catalyses 4 porphobilinogen + H2O = hydroxymethylbilane + 4 NH4(+). It participates in porphyrin-containing compound metabolism; protoporphyrin-IX biosynthesis; coproporphyrinogen-III from 5-aminolevulinate: step 2/4. In terms of biological role, tetrapolymerization of the monopyrrole PBG into the hydroxymethylbilane pre-uroporphyrinogen in several discrete steps. The polypeptide is Porphobilinogen deaminase (Xylella fastidiosa (strain M23)).